A 618-amino-acid polypeptide reads, in one-letter code: Citrolysin protein 1 (618 aa).

Its function is as follows. Bacterial hemolysins are exotoxins that attack blood cell membranes and cause cell rupture by mechanisms not clearly defined. The sequence is that of Citrolysin protein 1 from Citrobacter freundii.